Consider the following 227-residue polypeptide: Transcription antitermination protein NusB (227 aa).

Disordered stretches follow at residues 165–189 (ASESLDDAPVAPWDDSDALDDSDED) and 201–227 (AEETVEVSEVAEDSEVSKVSEEKADES). Acidic residues-rich tracts occupy residues 178–189 (DDSDALDDSDED) and 201–214 (AEETVEVSEVAEDS). The segment covering 215-227 (EVSKVSEEKADES) has biased composition (basic and acidic residues).

The protein belongs to the NusB family.

Its function is as follows. Involved in transcription antitermination. Required for transcription of ribosomal RNA (rRNA) genes. Binds specifically to the boxA antiterminator sequence of the ribosomal RNA (rrn) operons. This is Transcription antitermination protein NusB from Corynebacterium glutamicum (strain ATCC 13032 / DSM 20300 / JCM 1318 / BCRC 11384 / CCUG 27702 / LMG 3730 / NBRC 12168 / NCIMB 10025 / NRRL B-2784 / 534).